Reading from the N-terminus, the 239-residue chain is Large ribosomal subunit protein bL25 (239 aa).

The segment at 217–239 (IKAEAHAAEGTQAEGSTEEGQQQ) is disordered. The segment covering 229–239 (AEGSTEEGQQQ) has biased composition (polar residues).

Belongs to the bacterial ribosomal protein bL25 family. CTC subfamily. As to quaternary structure, part of the 50S ribosomal subunit; part of the 5S rRNA/L5/L18/L25 subcomplex. Contacts the 5S rRNA. Binds to the 5S rRNA independently of L5 and L18.

In terms of biological role, this is one of the proteins that binds to the 5S RNA in the ribosome where it forms part of the central protuberance. The sequence is that of Large ribosomal subunit protein bL25 from Deinococcus deserti (strain DSM 17065 / CIP 109153 / LMG 22923 / VCD115).